Consider the following 369-residue polypeptide: Putative F-box protein At1g70960 (369 aa).

Residues 3–54 enclose the F-box domain; that stretch reads NTSFETLPRHMQMEILSRVPLKFLMKFMCVSKKWASIIRGEEFREDYLFQSM.

This Arabidopsis thaliana (Mouse-ear cress) protein is Putative F-box protein At1g70960.